Reading from the N-terminus, the 75-residue chain is Protein Tlp homolog (75 aa).

Positions Arg53–Met75 are disordered.

It belongs to the Tlp family.

This is Protein Tlp homolog from Clostridium botulinum (strain ATCC 19397 / Type A).